We begin with the raw amino-acid sequence, 480 residues long: Glutamate--tRNA ligase (480 aa).

Positions 21-31 (PSPTGYLHVGG) match the 'HIGH' region motif. Cys-110, Cys-112, Cys-137, and His-139 together coordinate Zn(2+). The short motif at 248–252 (KLSKR) is the 'KMSKS' region element. Lys-251 is an ATP binding site.

It belongs to the class-I aminoacyl-tRNA synthetase family. Glutamate--tRNA ligase type 1 subfamily. In terms of assembly, monomer. It depends on Zn(2+) as a cofactor.

It is found in the cytoplasm. The catalysed reaction is tRNA(Glu) + L-glutamate + ATP = L-glutamyl-tRNA(Glu) + AMP + diphosphate. In terms of biological role, catalyzes the attachment of glutamate to tRNA(Glu) in a two-step reaction: glutamate is first activated by ATP to form Glu-AMP and then transferred to the acceptor end of tRNA(Glu). The sequence is that of Glutamate--tRNA ligase from Mannheimia succiniciproducens (strain KCTC 0769BP / MBEL55E).